Consider the following 541-residue polypeptide: Centrosomal protein of 63 kDa (541 aa).

N-acetylmethionine is present on Met-1. Coiled-coil stretches lie at residues 22–199 and 242–305; these read EAEL…ESVE and MTVL…TQHA. Ser-278 carries the phosphoserine modification. The tract at residues 294–324 is disordered; that stretch reads QEKVKATDTQHAVEAIRPREESPAEKKYTSQ. Basic and acidic residues predominate over residues 307-321; the sequence is EAIRPREESPAEKKY. Coiled-coil stretches lie at residues 346 to 485 and 514 to 541; these read LQAE…KLEL and HILE…TALK.

It belongs to the CEP63 family. Interacts with CEP152 and CDK1; these interactions recruit both ligands to centrosomes. Interacts with CDK2, CDK5RAP2, WDR62, CEP90, KIAA0753/moonraker and CCDC14. CEP63, CDK5RAP2, CEP152, WDR62 are proposed to form a stepwise assembled complex at the centrosome forming a ring near parental centrioles. Interacts with CCDC57; the interaction is required for their location to proximal end of centrioles. Interacts with FXR1; promoting its stabilization. Polyubiquitinated via 'Lys-48'-linked ubiquitin, leading to its degradation. Deubiquitinated by USP36, promoting its stabilization.

The protein resides in the cytoplasm. Its subcellular location is the cytoskeleton. The protein localises to the microtubule organizing center. It localises to the centrosome. It is found in the centriole. The protein resides in the centriolar satellite. Required for normal spindle assembly. Plays a key role in mother-centriole-dependent centriole duplication; the function seems also to involve CEP152, CDK5RAP2 and WDR62 through a stepwise assembled complex at the centrosome that recruits CDK2 required for centriole duplication. Reported to be required for centrosomal recruitment of CEP152; however, this function has been questioned. Also recruits CDK1 to centrosomes. Plays a role in DNA damage response. Following DNA damage, such as double-strand breaks (DSBs), is removed from centrosomes; this leads to the inactivation of spindle assembly and delay in mitotic progression. Promotes stabilization of FXR1 protein by inhibiting FXR1 ubiquitination. This is Centrosomal protein of 63 kDa (CEP63) from Pongo abelii (Sumatran orangutan).